We begin with the raw amino-acid sequence, 342 residues long: SH3 domain-containing YSC84-like protein 1 (342 aa).

A disordered region spans residues 218-266; sequence GQRINARKAAREQRKSSAKELPPKPLSRPQQSSAPVQLNSGSQSNRNEY. The span at 226-239 shows a compositional bias: basic and acidic residues; it reads AAREQRKSSAKELP. A compositionally biased stretch (polar residues) spans 245-263; it reads RPQQSSAPVQLNSGSQSNR. In terms of domain architecture, SH3 spans 283–342; sequence NQPIEVTALYSFEGQQPGDLNFQAGDRITVISKTDSHFDWWEGKLRGQTGIFPANYVTMN.

It belongs to the SH3YL1 family. Interacts with SH3D19.

This is SH3 domain-containing YSC84-like protein 1 (SH3YL1) from Homo sapiens (Human).